Consider the following 205-residue polypeptide: Holliday junction branch migration complex subunit RuvA (205 aa).

Positions 1 to 64 (MIGRLRGVLI…EDAQLLYGFI (64 aa)) are domain I. The segment at 65-143 (TKQERSLFRL…SLMEASVGSE (79 aa)) is domain II. Residues 144 to 156 (REFVLQSNYSPAP) are flexible linker. Residues 157 to 205 (TVNSAEEDAISALISLGYKPPQASKAVSAAYKEGMDSETLIKAALKSML) are domain III.

This sequence belongs to the RuvA family. Homotetramer. Forms an RuvA(8)-RuvB(12)-Holliday junction (HJ) complex. HJ DNA is sandwiched between 2 RuvA tetramers; dsDNA enters through RuvA and exits via RuvB. An RuvB hexamer assembles on each DNA strand where it exits the tetramer. Each RuvB hexamer is contacted by two RuvA subunits (via domain III) on 2 adjacent RuvB subunits; this complex drives branch migration. In the full resolvosome a probable DNA-RuvA(4)-RuvB(12)-RuvC(2) complex forms which resolves the HJ.

It is found in the cytoplasm. Its function is as follows. The RuvA-RuvB-RuvC complex processes Holliday junction (HJ) DNA during genetic recombination and DNA repair, while the RuvA-RuvB complex plays an important role in the rescue of blocked DNA replication forks via replication fork reversal (RFR). RuvA specifically binds to HJ cruciform DNA, conferring on it an open structure. The RuvB hexamer acts as an ATP-dependent pump, pulling dsDNA into and through the RuvAB complex. HJ branch migration allows RuvC to scan DNA until it finds its consensus sequence, where it cleaves and resolves the cruciform DNA. This chain is Holliday junction branch migration complex subunit RuvA, found in Shewanella sp. (strain MR-7).